The primary structure comprises 545 residues: Capsular polysaccharide phosphotransferase SacB (545 aa).

This sequence belongs to the stealth family.

May be the polymerase that links individual UDP-N-acetyl-D-mannosamine monomers. In serotype A the capsule is composed of repeated units of (alpha 1-6)-linked N-acetyl-D-mannosamine-1-phosphate. The polypeptide is Capsular polysaccharide phosphotransferase SacB (sacB) (Neisseria meningitidis serogroup A).